Consider the following 268-residue polypeptide: Tryptophan synthase alpha chain (268 aa).

Catalysis depends on proton acceptor residues Glu49 and Asp60.

The protein belongs to the TrpA family. As to quaternary structure, tetramer of two alpha and two beta chains.

The catalysed reaction is (1S,2R)-1-C-(indol-3-yl)glycerol 3-phosphate + L-serine = D-glyceraldehyde 3-phosphate + L-tryptophan + H2O. The protein operates within amino-acid biosynthesis; L-tryptophan biosynthesis; L-tryptophan from chorismate: step 5/5. Its function is as follows. The alpha subunit is responsible for the aldol cleavage of indoleglycerol phosphate to indole and glyceraldehyde 3-phosphate. This is Tryptophan synthase alpha chain from Escherichia coli (strain SE11).